The sequence spans 360 residues: ACT1-like protein (360 aa).

A disordered region spans residues 339 to 360 (KKQSHNNANDHHEDSMNYSITQ).

Interacts with the receptor complex composed of ilcr-1 and ilcr-2. Also interacts with pik-1. Expressed in neurons.

Its function is as follows. May act as an adapter to facilitate downstream signaling for the receptor complex composed of ilcr-1 and ilcr-2, which is a signaling complex that modulates neuronal activity and animal behavior in response to sensory neuron input. This chain is ACT1-like protein, found in Caenorhabditis elegans.